Here is a 661-residue protein sequence, read N- to C-terminus: Pseudouridylate synthase 7 homolog (661 aa).

At Met1 the chain carries N-acetylmethionine. Residues Met1–Glu97 form a disordered region. Ser10 is modified (phosphoserine). Over residues Ser36–Leu52 the composition is skewed to polar residues. A compositionally biased stretch (acidic residues) spans Gln77 to Glu97. Ser127 carries the phosphoserine modification. Residue Asp294 is the Nucleophile of the active site. Residues Gly370 to Arg580 form the TRUD domain. Thr610 bears the Phosphothreonine mark.

This sequence belongs to the pseudouridine synthase TruD family. As to quaternary structure, interacts with SIRT1.

It localises to the nucleus. It catalyses the reaction a uridine in tRNA = a pseudouridine in tRNA. It carries out the reaction uridine(13) in tRNA = pseudouridine(13) in tRNA. The enzyme catalyses a uridine in mRNA = a pseudouridine in mRNA. In terms of biological role, pseudouridylate synthase that catalyzes pseudouridylation of RNAs. Acts as a regulator of protein synthesis in embryonic stem cells by mediating pseudouridylation of RNA fragments derived from tRNAs (tRFs): pseudouridylated tRFs inhibit translation by targeting the translation initiation complex. Also catalyzes pseudouridylation of mRNAs: mediates pseudouridylation of mRNAs with the consensus sequence 5'-UGUAG-3'. Acts as a regulator of pre-mRNA splicing by mediating pseudouridylation of pre-mRNAs at locations associated with alternatively spliced regions. Pseudouridylation of pre-mRNAs near splice sites directly regulates mRNA splicing and mRNA 3'-end processing. In addition to mRNAs and tRNAs, binds other types of RNAs, such as snRNAs, Y RNAs and vault RNAs, suggesting that it can catalyze pseudouridylation of many RNA types. This Homo sapiens (Human) protein is Pseudouridylate synthase 7 homolog.